We begin with the raw amino-acid sequence, 592 residues long: uncharacterized protein (592 aa).

This is an uncharacterized protein from Acanthamoeba polyphaga mimivirus (APMV).